A 105-amino-acid polypeptide reads, in one-letter code: MKNKIKIRLKSFDHHSLDQATKEIVSAVKRTFASINGPIPLPRKIERFTVNRSPHVHKKSREQFEIRKHKRLLVIDDPNPAVVDALSKVDLAAGVDVVIELESGE.

It belongs to the universal ribosomal protein uS10 family. Part of the 30S ribosomal subunit.

Functionally, involved in the binding of tRNA to the ribosomes. The protein is Small ribosomal subunit protein uS10 of Rickettsia akari (strain Hartford).